Reading from the N-terminus, the 308-residue chain is Coenzyme PQQ synthesis protein B (308 aa).

Belongs to the PqqB family.

The protein operates within cofactor biosynthesis; pyrroloquinoline quinone biosynthesis. May be involved in the transport of PQQ or its precursor to the periplasm. The sequence is that of Coenzyme PQQ synthesis protein B from Rhodopseudomonas palustris (strain TIE-1).